Reading from the N-terminus, the 271-residue chain is Phosphatidylglycerol--prolipoprotein diacylglyceryl transferase (271 aa).

The next 3 membrane-spanning stretches (helical) occupy residues 17-37, 63-83, and 95-115; these read LAIH…FFLA, ILFL…CLFY, and IFAV…VLVS. An a 1,2-diacyl-sn-glycero-3-phospho-(1'-sn-glycerol)-binding site is contributed by Arg146. 3 consecutive transmembrane segments (helical) span residues 182–202, 209–229, and 243–263; these read SQVY…WLYA, GQVS…AEFF, and MSMG…LWIW.

Belongs to the Lgt family.

It localises to the cell inner membrane. The catalysed reaction is L-cysteinyl-[prolipoprotein] + a 1,2-diacyl-sn-glycero-3-phospho-(1'-sn-glycerol) = an S-1,2-diacyl-sn-glyceryl-L-cysteinyl-[prolipoprotein] + sn-glycerol 1-phosphate + H(+). Its pathway is protein modification; lipoprotein biosynthesis (diacylglyceryl transfer). Its function is as follows. Catalyzes the transfer of the diacylglyceryl group from phosphatidylglycerol to the sulfhydryl group of the N-terminal cysteine of a prolipoprotein, the first step in the formation of mature lipoproteins. This chain is Phosphatidylglycerol--prolipoprotein diacylglyceryl transferase, found in Polaromonas naphthalenivorans (strain CJ2).